A 225-amino-acid chain; its full sequence is Ribonuclease 3 (225 aa).

Positions 2–128 constitute an RNase III domain; sequence LSTLIKKLKI…LFGAIYLDLG (127 aa). E43 lines the Mg(2+) pocket. The active site involves D47. Positions 114 and 117 each coordinate Mg(2+). E117 is an active-site residue. In terms of domain architecture, DRBM spans 152–220; that stretch reads DFKTQLQELV…ARYVLNILSK (69 aa).

The protein belongs to the ribonuclease III family. Homodimer. The cofactor is Mg(2+).

The protein resides in the cytoplasm. The catalysed reaction is Endonucleolytic cleavage to 5'-phosphomonoester.. In terms of biological role, digests double-stranded RNA. Involved in the processing of primary rRNA transcript to yield the immediate precursors to the large and small rRNAs (23S and 16S). Processes some mRNAs, and tRNAs when they are encoded in the rRNA operon. Processes pre-crRNA and tracrRNA of type II CRISPR loci if present in the organism. In Phytoplasma mali (strain AT), this protein is Ribonuclease 3.